Reading from the N-terminus, the 699-residue chain is D-(-)-3-hydroxybutyrate oligomer hydrolase (699 aa).

The signal sequence occupies residues Met-1–Ala-33. Ser-311 (charge relay system) is an active-site residue.

This sequence belongs to the D-(-)-3-hydroxybutyrate oligomer hydrolase family.

Its subcellular location is the secreted. It carries out the reaction (3R)-hydroxybutanoate dimer + H2O = 2 (R)-3-hydroxybutanoate + H(+). It participates in lipid metabolism; butanoate metabolism. In terms of biological role, participates in the degradation of poly-3-hydroxybutyrate (PHB). It works downstream of poly(3-hydroxybutyrate) depolymerase, hydrolyzing D(-)-3-hydroxybutyrate oligomers of various length (3HB-oligomers) into 3HB-monomers. This chain is D-(-)-3-hydroxybutyrate oligomer hydrolase, found in Burkholderia mallei (strain NCTC 10247).